Here is a 349-residue protein sequence, read N- to C-terminus: Histidinol-phosphate aminotransferase (349 aa).

Residue lysine 206 is modified to N6-(pyridoxal phosphate)lysine.

The protein belongs to the class-II pyridoxal-phosphate-dependent aminotransferase family. Histidinol-phosphate aminotransferase subfamily. As to quaternary structure, homodimer. Requires pyridoxal 5'-phosphate as cofactor.

The catalysed reaction is L-histidinol phosphate + 2-oxoglutarate = 3-(imidazol-4-yl)-2-oxopropyl phosphate + L-glutamate. It participates in amino-acid biosynthesis; L-histidine biosynthesis; L-histidine from 5-phospho-alpha-D-ribose 1-diphosphate: step 7/9. The chain is Histidinol-phosphate aminotransferase from Streptococcus mutans serotype c (strain ATCC 700610 / UA159).